The sequence spans 175 residues: Alpha-crystallin B chain (175 aa).

Met1 is modified (N-acetylmethionine). Position 19 is a phosphoserine (Ser19). O-linked (GlcNAc) serine glycosylation occurs at Ser41. Phosphoserine is present on residues Ser45 and Ser59. The sHSP domain maps to 56–164; sequence RAPSWIDTGL…PERTIPITRE (109 aa). Residue His83 coordinates Zn(2+). Lys92 is modified (N6-acetyllysine). Positions 104, 106, 111, and 119 each coordinate Zn(2+). The tract at residues 142–175 is disordered; that stretch reads VLTVNGPRRQASGPERTIPITREEKPAVTAAPKK. N6-acetyllysine is present on Lys166. Thr170 carries O-linked (GlcNAc) threonine glycosylation.

It belongs to the small heat shock protein (HSP20) family. In terms of assembly, heteromer composed of three CRYAA and one CRYAB subunits. Aggregates with homologous proteins, including the small heat shock protein HSPB1, to form large heteromeric complexes. Inter-subunit bridging via zinc ions enhances stability, which is crucial as there is no protein turn over in the lens. Interacts with HSPBAP1 and TTN/titin. Interacts with TMEM109; in the cellular response to DNA damage. Interacts with DES; binds rapidly during early stages of DES filament assembly and a reduced binding seen in the later stages. Interacts with TMED10; the interaction mediates the translocation from the cytoplasm into the ERGIC (endoplasmic reticulum-Golgi intermediate compartment) and thereby secretion. Interacts with ATP6V1A and with MTOR, forming a ternary complex.

It localises to the cytoplasm. It is found in the nucleus. Its subcellular location is the secreted. The protein localises to the lysosome. May contribute to the transparency and refractive index of the lens. Has chaperone-like activity, preventing aggregation of various proteins under a wide range of stress conditions. In lens epithelial cells, stabilizes the ATP6V1A protein, preventing its degradation by the proteasome. The polypeptide is Alpha-crystallin B chain (CRYAB) (Sus scrofa (Pig)).